Here is a 137-residue protein sequence, read N- to C-terminus: Large ribosomal subunit protein uL16 (137 aa).

Belongs to the universal ribosomal protein uL16 family. In terms of assembly, part of the 50S ribosomal subunit.

Binds 23S rRNA and is also seen to make contacts with the A and possibly P site tRNAs. This is Large ribosomal subunit protein uL16 from Paracoccus denitrificans (strain Pd 1222).